Here is a 292-residue protein sequence, read N- to C-terminus: Ribosomal protein L11 methyltransferase (292 aa).

S-adenosyl-L-methionine-binding residues include Thr-143, Gly-164, Asp-186, and Asn-228.

Belongs to the methyltransferase superfamily. PrmA family.

It localises to the cytoplasm. The catalysed reaction is L-lysyl-[protein] + 3 S-adenosyl-L-methionine = N(6),N(6),N(6)-trimethyl-L-lysyl-[protein] + 3 S-adenosyl-L-homocysteine + 3 H(+). Methylates ribosomal protein L11. The protein is Ribosomal protein L11 methyltransferase of Aeromonas salmonicida (strain A449).